A 442-amino-acid polypeptide reads, in one-letter code: Glutamate--tRNA ligase 1 (442 aa).

Residues 9-19 (PSPTGKLHVGN) carry the 'HIGH' region motif. Positions 240–244 (KLSKR) match the 'KMSKS' region motif. Lys243 is an ATP binding site.

Belongs to the class-I aminoacyl-tRNA synthetase family. Glutamate--tRNA ligase type 1 subfamily. As to quaternary structure, monomer.

Its subcellular location is the cytoplasm. The catalysed reaction is tRNA(Glu) + L-glutamate + ATP = L-glutamyl-tRNA(Glu) + AMP + diphosphate. Its function is as follows. Catalyzes the attachment of glutamate to tRNA(Glu) in a two-step reaction: glutamate is first activated by ATP to form Glu-AMP and then transferred to the acceptor end of tRNA(Glu). The protein is Glutamate--tRNA ligase 1 of Novosphingobium aromaticivorans (strain ATCC 700278 / DSM 12444 / CCUG 56034 / CIP 105152 / NBRC 16084 / F199).